Reading from the N-terminus, the 163-residue chain is UPF0763 protein C8J_0930 (163 aa).

This sequence belongs to the UPF0763 family.

The chain is UPF0763 protein C8J_0930 from Campylobacter jejuni subsp. jejuni serotype O:6 (strain 81116 / NCTC 11828).